A 762-amino-acid polypeptide reads, in one-letter code: 5-methyltetrahydropteroyltriglutamate--homocysteine methyltransferase (762 aa).

Residues 18-21 (REWK) and K112 contribute to the 5-methyltetrahydropteroyltri-L-glutamate site. L-homocysteine-binding positions include 435–437 (IGS) and E488. L-methionine contacts are provided by residues 435–437 (IGS) and E488. Residues 519-520 (RC) and W565 contribute to the 5-methyltetrahydropteroyltri-L-glutamate site. D603 contributes to the L-homocysteine binding site. Residue D603 coordinates L-methionine. Residue E609 participates in 5-methyltetrahydropteroyltri-L-glutamate binding. Zn(2+)-binding residues include H645, C647, and E669. The active-site Proton donor is H698. A Zn(2+)-binding site is contributed by C730.

It belongs to the vitamin-B12 independent methionine synthase family. It depends on Zn(2+) as a cofactor.

It catalyses the reaction 5-methyltetrahydropteroyltri-L-glutamate + L-homocysteine = tetrahydropteroyltri-L-glutamate + L-methionine. It participates in amino-acid biosynthesis; L-methionine biosynthesis via de novo pathway; L-methionine from L-homocysteine (MetE route): step 1/1. Catalyzes the transfer of a methyl group from 5-methyltetrahydrofolate to homocysteine resulting in methionine formation. This chain is 5-methyltetrahydropteroyltriglutamate--homocysteine methyltransferase, found in Bacillus licheniformis (strain ATCC 14580 / DSM 13 / JCM 2505 / CCUG 7422 / NBRC 12200 / NCIMB 9375 / NCTC 10341 / NRRL NRS-1264 / Gibson 46).